The following is a 410-amino-acid chain: Na(+)-translocating NADH-quinone reductase subunit B (410 aa).

Transmembrane regions (helical) follow at residues 56–76 (MMIL…YNVG), 119–139 (LFGA…GGFW), and 159–179 (SILF…ALGI). At T232 the chain carries FMN phosphoryl threonine. The next 5 helical transmembrane spans lie at 266–286 (GSIG…IVFA), 293–313 (IIAG…FIGS), 318–338 (MFAM…GMLF), 347–367 (SFTN…CVLI), and 377–397 (GMML…YFVA).

Belongs to the NqrB/RnfD family. In terms of assembly, composed of six subunits; NqrA, NqrB, NqrC, NqrD, NqrE and NqrF. It depends on FMN as a cofactor.

The protein resides in the cell inner membrane. It catalyses the reaction a ubiquinone + n Na(+)(in) + NADH + H(+) = a ubiquinol + n Na(+)(out) + NAD(+). NQR complex catalyzes the reduction of ubiquinone-1 to ubiquinol by two successive reactions, coupled with the transport of Na(+) ions from the cytoplasm to the periplasm. NqrA to NqrE are probably involved in the second step, the conversion of ubisemiquinone to ubiquinol. This Neisseria meningitidis serogroup B (strain ATCC BAA-335 / MC58) protein is Na(+)-translocating NADH-quinone reductase subunit B.